The following is a 407-amino-acid chain: Peptidase T (407 aa).

Residue His82 coordinates Zn(2+). Residue Asp84 is part of the active site. Asp143 is a binding site for Zn(2+). The Proton acceptor role is filled by Glu177. Zn(2+) contacts are provided by Glu178, Asp200, and His382.

This sequence belongs to the peptidase M20B family. It depends on Zn(2+) as a cofactor.

Its subcellular location is the cytoplasm. The enzyme catalyses Release of the N-terminal residue from a tripeptide.. In terms of biological role, cleaves the N-terminal amino acid of tripeptides. This Streptococcus pyogenes serotype M18 (strain MGAS8232) protein is Peptidase T.